Here is a 455-residue protein sequence, read N- to C-terminus: N(5)-hydroxyornithine:cis-anhydromevalonyl coenzyme A-N(5)-transacylase SIDF (455 aa).

A PTS1-type peroxisomal targeting signal motif is present at residues 453-455 (PKL).

It belongs to the lysine N-acyltransferase mbtK family.

It is found in the peroxisome. It functions in the pathway siderophore biosynthesis. Its function is as follows. Hydroxyornithine transacylase; part of the gene cluster that mediates the biosynthesis of at least 11 siderophores, including beauverichelin A, dimerumic acid (DA), Na-dimethyl coprogen (NADC), eleutherazine B, ferricrocin (FC), fusarinine A, fusarinine C (FsC), metachelin A, mevalonolactone, rhodotorulic acid (RA) and tenellin. This cocktail of siderophores for iron metabolism is essential for virulence, and more specifically for the fungal virulence in penetrating through the host cuticle. Siderophore synthesis is also involved in conidial germination under iron-deficient conditions. For biosynthesis of fusarinine C, the transacylase SIDF transfers anhydromevalonyl to N(5)-hydroxyornithine. The required anhydromevalonyl-CoA moiety is derived from mevalonate by CoA ligation and dehydration catalyzed by SIDI and sidH respectively. This is N(5)-hydroxyornithine:cis-anhydromevalonyl coenzyme A-N(5)-transacylase SIDF from Beauveria bassiana (strain ARSEF 2860) (White muscardine disease fungus).